We begin with the raw amino-acid sequence, 602 residues long: Arp2/3 complex-activating protein rickA (602 aa).

Disordered stretches follow at residues 307–484 (SSLA…AGPK), 516–535 (VEFD…KPVQ), and 555–602 (MSDS…SFVK). A compositionally biased stretch (pro residues) spans 318–442 (TPPPPLPGNN…IPPPPPPPMA (125 aa)). WH2 domains are found at residues 472–489 (DTSD…LRKV) and 499–516 (SRDL…LKKV). Positions 475–484 (DLMREIAGPK) are enriched in basic and acidic residues. The interval 537-570 (VNKLSGVASILARRVVMEMSDSSGSESDSGNWSD) is central and acidic domains. Low complexity predominate over residues 555–566 (MSDSSGSESDSG). Positions 578–590 (KTLKTKRERRKIL) are enriched in basic residues. Over residues 591-602 (NNRNSQKPSFVK) the composition is skewed to polar residues.

In terms of assembly, homodimer.

The protein resides in the cell surface. Recruits and activates the Arp2/3 complex, which in turn leads to actin polymerization, promoting Rickettsia motility during infection. This is Arp2/3 complex-activating protein rickA (rickA) from Rickettsia montanensis.